A 289-amino-acid chain; its full sequence is ATP synthase gamma chain (289 aa).

The protein belongs to the ATPase gamma chain family. F-type ATPases have 2 components, CF(1) - the catalytic core - and CF(0) - the membrane proton channel. CF(1) has five subunits: alpha(3), beta(3), gamma(1), delta(1), epsilon(1). CF(0) has three main subunits: a, b and c.

The protein localises to the cell membrane. Its function is as follows. Produces ATP from ADP in the presence of a proton gradient across the membrane. The gamma chain is believed to be important in regulating ATPase activity and the flow of protons through the CF(0) complex. This chain is ATP synthase gamma chain, found in Buchnera aphidicola subsp. Melaphis rhois.